The following is a 269-amino-acid chain: MPRFALTVIRHGETRLNKEKIIQGQGVDAPLSETGFRQAAAAGQFLSNVQFTHAFSSDLTRTKQTIHGILEKSRFCKDMAVKYDSRLRERMYGVAEGKPLSELRAMAKAAGEECPMFTPPGGETVEQVKMRGKDFFDFICQLILGKAGQRESVLPGAPGSGLESSLAEVFPVGKHGSLGANPKGGTLGLAASILVVSHGAYMRSLFGYFLSDLRCSLPGARDKLELSSITPNTGISVFIIDCEEARQPSIQCVCMNLQEHLNGVTEKQH.

Residue His11 is the Tele-phosphohistidine intermediate of the active site. Residue Glu89 is the Proton donor/acceptor of the active site.

This sequence belongs to the phosphoglycerate mutase family. In terms of assembly, interacts with HK2; the interaction increases hexokinase HK2 activity in a hypoxia- and HIF1A-dependent manner, resulting in the regulation of mitochondrial membrane potential, thus increasing NADPH production and decreasing intracellular ROS levels. In terms of tissue distribution, expressed in olfactory bulb, cerebellum, and cortex. Expressed in neurons and astrocytes (at protein level). Expressed in intestinal crypt.

Its subcellular location is the cytoplasm. The protein localises to the nucleus. It is found in the mitochondrion. It carries out the reaction beta-D-fructose 2,6-bisphosphate + H2O = beta-D-fructose 6-phosphate + phosphate. In terms of biological role, fructose-bisphosphatase hydrolyzing fructose-2,6-bisphosphate as well as fructose-1,6-bisphosphate. Acts as a negative regulator of glycolysis by lowering intracellular levels of fructose-2,6-bisphosphate in a p53/TP53-dependent manner, resulting in the pentose phosphate pathway (PPP) activation and NADPH production. Contributes to the generation of reduced glutathione to cause a decrease in intracellular reactive oxygen species (ROS) content, correlating with its ability to protect cells from oxidative or metabolic stress-induced cell death. Plays a role in promoting protection against cell death during hypoxia by decreasing mitochondria ROS levels in a HK2-dependent manner through a mechanism that is independent of its fructose-bisphosphatase activity. In response to cardiac damage stress, mediates p53-induced inhibition of myocyte mitophagy through ROS levels reduction and the subsequent inactivation of BNIP3. Reduced mitophagy results in an enhanced apoptotic myocyte cell death, and exacerbates cardiac damage. Plays a role in adult intestinal regeneration; contributes to the growth, proliferation and survival of intestinal crypts following tissue ablation. Plays a neuroprotective role against ischemic brain damage by enhancing PPP flux and preserving mitochondria functions. Protects glioma cells from hypoxia- and ROS-induced cell death by inhibiting glycolysis and activating mitochondrial energy metabolism and oxygen consumption in a TKTL1-dependent and p53/TP53-independent manner. Plays a role in cancer cell survival by promoting DNA repair through activating PPP flux in a CDK5-ATM-dependent signaling pathway during hypoxia and/or genome stress-induced DNA damage responses. Involved in intestinal tumor progression. The chain is Fructose-2,6-bisphosphatase TIGAR from Mus musculus (Mouse).